We begin with the raw amino-acid sequence, 362 residues long: Cytochrome c peroxidase, mitochondrial (362 aa).

A mitochondrion-targeting transit peptide spans 1–40; sequence MASASRQILRAASRASTRTAFAPAASRGLAARTIAGRRFY. H121 acts as the Proton acceptor in catalysis. Position 244 (H244) interacts with heme b. Catalysis depends on W260, which acts as the Tryptophan radical intermediate.

This sequence belongs to the peroxidase family. Cytochrome c peroxidase subfamily. In terms of assembly, forms a one-to-one complex with cytochrome c. Requires heme b as cofactor.

It localises to the mitochondrion matrix. Its subcellular location is the mitochondrion intermembrane space. It catalyses the reaction 2 Fe(II)-[cytochrome c] + H2O2 + 2 H(+) = 2 Fe(III)-[cytochrome c] + 2 H2O. In terms of biological role, destroys radicals which are normally produced within the cells and which are toxic to biological systems. The sequence is that of Cytochrome c peroxidase, mitochondrial (CCP1) from Pyricularia oryzae (strain 70-15 / ATCC MYA-4617 / FGSC 8958) (Rice blast fungus).